Here is a 183-residue protein sequence, read N- to C-terminus: Capsid protein (183 aa).

Positions 136-183 are disordered; sequence NAPILSTLPETTVVRRRGRSPRRRTPSPRRRRSQSPRRRRSQSRESQC. The span at 149–176 shows a compositional bias: basic residues; that stretch reads VRRRGRSPRRRTPSPRRRRSQSPRRRRS. Residues serine 155, serine 162, and serine 170 each carry the phosphoserine; by host modification. One copy of the 1; half-length repeat lies at 155 to 161; it reads SPRRRTP. The 3 X 8 AA repeats of S-P-R-R-R-[PR]-S-Q stretch occupies residues 155–177; it reads SPRRRTPSPRRRRSQSPRRRRSQ. The short motif at 158 to 175 is the Bipartite nuclear localization signal element; sequence RRTPSPRRRRSQSPRRRR. 2 repeat units span residues 162 to 169 and 170 to 177. Residues 177-183 form an RNA binding region; the sequence is QSRESQC.

Belongs to the orthohepadnavirus core antigen family. As to quaternary structure, homodimerizes, then multimerizes. Interacts with cytosol exposed regions of viral L glycoprotein present in the reticulum-to-Golgi compartment. Interacts with human FLNB. Phosphorylated form interacts with host importin alpha; this interaction depends on the exposure of the NLS, which itself depends upon genome maturation and/or phosphorylation of the capsid protein. Interacts with host NUP153. Post-translationally, phosphorylated by host SRPK1, SRPK2, and maybe protein kinase C or GAPDH. Phosphorylation is critical for pregenomic RNA packaging. Protein kinase C phosphorylation is stimulated by HBx protein and may play a role in transport of the viral genome to the nucleus at the late step during the viral replication cycle.

The protein resides in the virion. Its subcellular location is the host cytoplasm. Its function is as follows. Self assembles to form an icosahedral capsid. Most capsids appear to be large particles with an icosahedral symmetry of T=4 and consist of 240 copies of capsid protein, though a fraction forms smaller T=3 particles consisting of 180 capsid proteins. Entering capsids are transported along microtubules to the nucleus. Phosphorylation of the capsid is thought to induce exposure of nuclear localization signal in the C-terminal portion of the capsid protein that allows binding to the nuclear pore complex via the importin (karyopherin-) alpha and beta. Capsids are imported in intact form through the nuclear pore into the nuclear basket, where it probably binds NUP153. Only capsids that contain the mature viral genome can release the viral DNA and capsid protein into the nucleoplasm. Immature capsids get stuck in the basket. Capsids encapsulate the pre-genomic RNA and the P protein. Pre-genomic RNA is reverse-transcribed into DNA while the capsid is still in the cytoplasm. The capsid can then either be directed to the nucleus, providing more genomes for transcription, or bud through the endoplasmic reticulum to provide new virions. This chain is Capsid protein, found in Homo sapiens (Human).